We begin with the raw amino-acid sequence, 152 residues long: 3-hydroxyacyl-[acyl-carrier-protein] dehydratase FabZ (152 aa).

Residue histidine 57 is part of the active site.

This sequence belongs to the thioester dehydratase family. FabZ subfamily.

The protein resides in the cytoplasm. It carries out the reaction a (3R)-hydroxyacyl-[ACP] = a (2E)-enoyl-[ACP] + H2O. In terms of biological role, involved in unsaturated fatty acids biosynthesis. Catalyzes the dehydration of short chain beta-hydroxyacyl-ACPs and long chain saturated and unsaturated beta-hydroxyacyl-ACPs. This is 3-hydroxyacyl-[acyl-carrier-protein] dehydratase FabZ from Bradyrhizobium sp. (strain ORS 278).